Consider the following 93-residue polypeptide: Small ribosomal subunit protein uS17 (93 aa).

This sequence belongs to the universal ribosomal protein uS17 family. In terms of assembly, part of the 30S ribosomal subunit.

Functionally, one of the primary rRNA binding proteins, it binds specifically to the 5'-end of 16S ribosomal RNA. This is Small ribosomal subunit protein uS17 from Bordetella avium (strain 197N).